We begin with the raw amino-acid sequence, 330 residues long: MISFSSFYQQIADSNLQHWLEELPAILGQWQREHKHGNLPKWEKVLNKLHYPAPDRIDFTTRVEVGSGDQLSKGQQEKLKNLLKLFCPWRKGPFDLHGIHIDTEWRSDWKWERVQPHISPLKNRTVLDVGCGSGYHMWRMLGDGAKRVVGIDPSPLFLCQFEAVKRLAGNDHPVHLLPLGIEQLPPLDAFDTVFSMGVLYHRRSPIDHLLQLRDQLRTGGELVLETLVVDGDENTVLVPGERYGKMNNVWFLPSAKALEAWLKKADFVDVRCVDIDVTSLAEQRSTEWMPNESLVDYLDPNDVSLTVEGYPAPKRATFIAVKNQPNKDLV.

Carboxy-S-adenosyl-L-methionine contacts are provided by residues Lys-91, Trp-105, Lys-110, Gly-130, Asp-152 to Ser-154, Ile-181 to Glu-182, Met-196, Tyr-200, and Arg-315.

The protein belongs to the class I-like SAM-binding methyltransferase superfamily. CmoB family. Homotetramer.

It carries out the reaction carboxy-S-adenosyl-L-methionine + 5-hydroxyuridine(34) in tRNA = 5-carboxymethoxyuridine(34) in tRNA + S-adenosyl-L-homocysteine + H(+). Catalyzes carboxymethyl transfer from carboxy-S-adenosyl-L-methionine (Cx-SAM) to 5-hydroxyuridine (ho5U) to form 5-carboxymethoxyuridine (cmo5U) at position 34 in tRNAs. This Shewanella loihica (strain ATCC BAA-1088 / PV-4) protein is tRNA U34 carboxymethyltransferase.